The primary structure comprises 309 residues: Dicarboxylate carrier UCP2 (309 aa).

At 1–16 (MVGFKATDVPPTATVK) the chain is on the mitochondrial intermembrane side. 3 Solcar repeats span residues 11–106 (PTAT…VKQF), 114–203 (AGIG…IKDT), and 212–297 (DDLP…LKRA). The interval 16-63 (KFLGAGTAACIADLITFPLDTAKVRLQIQGESQGLVRTAASAQYRGVL) is important for interaction with long-chain fatty acids. The chain crosses the membrane as a helical span at residues 17-40 (FLGAGTAACIADLITFPLDTAKVR). Residues 41 to 77 (LQIQGESQGLVRTAASAQYRGVLGTILTMVRTEGPRS) lie on the Mitochondrial matrix side of the membrane. The helical transmembrane segment at 78–103 (LYNGLVAGLQRQMSFASVRIGLYDSV) threads the bilayer. Topologically, residues 104 to 119 (KQFYTKGSEHAGIGSR) are mitochondrial intermembrane. Residues 120 to 145 (LLAGSTTGALAVAVAQPTDVVKVRFQ) traverse the membrane as a helical segment. At 146–173 (AQARAGGGRRYQSTVEAYKTIAREEGIR) the chain is on the mitochondrial matrix side. Residues 174–199 (GLWKGTSPNVARNAIVNCAELVTYDL) traverse the membrane as a helical segment. Over 200–217 (IKDTLLKANLMTDDLPCH) the chain is Mitochondrial intermembrane. Residues 218–242 (FTSAFGAGFCTTVIASPVDVVKTRY) form a helical membrane-spanning segment. Residues 243-268 (MNSALGQYHSAGHCALTMLRKEGPRA) lie on the Mitochondrial matrix side of the membrane. The helical transmembrane segment at 269 to 294 (FYKGFMPSFLRLGSWNVVMFVTYEQL) threads the bilayer. An important for interaction with long-chain fatty acids region spans residues 278–285 (LRLGSWNV). Over 295-309 (KRALMAAYQSREAPF) the chain is Mitochondrial intermembrane.

It belongs to the mitochondrial carrier (TC 2.A.29) family. Homotetramer. Adopts an asymmetrical dimer of dimers functional form. Interacts with MICU1 (when methylated); leading to decrease the calcium sensitivity of MICU1. In terms of tissue distribution, widely expressed. Highest in spleen, lung, white and brown adipose tissues. 4-6 times higher levels are detected in white adipose tissue of ob/ob and db/db mice when compared to lean littermates. Expressed in neurons of the ventromedial nucleus of the hypothalamus (at protein level). Expressed in thymocytes (at protein level).

It localises to the mitochondrion inner membrane. The enzyme catalyses L-aspartate(out) + phosphate(in) + H(+)(in) = L-aspartate(in) + phosphate(out) + H(+)(out). It carries out the reaction oxaloacetate(out) + phosphate(in) + H(+)(in) = oxaloacetate(in) + phosphate(out) + H(+)(out). The catalysed reaction is (S)-malate(out) + phosphate(in) + H(+)(in) = (S)-malate(in) + phosphate(out) + H(+)(out). It catalyses the reaction malonate(out) + phosphate(in) + H(+)(in) = malonate(in) + phosphate(out) + H(+)(out). The enzyme catalyses sulfate(out) + phosphate(in) + H(+)(in) = sulfate(in) + phosphate(out) + H(+)(out). It carries out the reaction (S)-malate(out) = (S)-malate(in). The catalysed reaction is L-aspartate(out) = L-aspartate(in). It catalyses the reaction phosphate(in) = phosphate(out). The enzyme catalyses chloride(in) = chloride(out). It carries out the reaction H(+)(in) = H(+)(out). The catalysed reaction is a long-chain fatty acid(out) = a long-chain fatty acid(in). Proton conductance is activated by free long-chain fatty acids and allosterically inhibited by purine nucleotides. Could be constitutively inhibited by GDP. Functionally, antiporter that exports dicarboxylate intermediates of the Krebs cycle in exchange for phosphate plus a proton across the inner membrane of mitochondria, a process driven by mitochondrial motive force with an overall impact on glycolysis, glutaminolysis and glutathione-dependent redox balance. Continuous export of oxaloacetate and related four-carbon dicarboxylates from mitochondrial matrix into the cytosol negatively regulates the oxidation of acetyl-CoA substrates via the Krebs cycle lowering the ATP/ADP ratio and reactive oxygen species (ROS) production. May mediate inducible proton entry into the mitochondrial matrix affecting ATP turnover as a protection mechanism against oxidative stress. The proton currents are most likely associated with fatty acid flipping across the inner membrane of mitochondria in a metabolic process regulated by free fatty acids and purine nucleotides. Regulates the use of glucose as a source of energy. Required for glucose-induced DRP1-dependent mitochondrial fission and neuron activation in the ventromedial nucleus of the hypothalamus (VMH). This mitochondrial adaptation mechanism modulates the VMH pool of glucose-excited neurons with an impact on systemic glucose homeostasis. Regulates ROS levels and metabolic reprogramming of macrophages during the resolution phase of inflammation. Attenuates ROS production in response to IL33 to preserve the integrity of the Krebs cycle required for persistent production of itaconate and subsequent GATA3-dependent differentiation of inflammation-resolving alternatively activated macrophages. Can unidirectionally transport anions including L-malate, L-aspartate, phosphate and chloride ions. Does not mediate adaptive thermogenesis. The protein is Dicarboxylate carrier UCP2 (Ucp2) of Mus musculus (Mouse).